The chain runs to 314 residues: Ribonuclease Z (314 aa).

His-63, His-65, Asp-67, His-68, His-142, Asp-205, and His-263 together coordinate Zn(2+). The active-site Proton acceptor is the Asp-67.

This sequence belongs to the RNase Z family. Homodimer. It depends on Zn(2+) as a cofactor.

It carries out the reaction Endonucleolytic cleavage of RNA, removing extra 3' nucleotides from tRNA precursor, generating 3' termini of tRNAs. A 3'-hydroxy group is left at the tRNA terminus and a 5'-phosphoryl group is left at the trailer molecule.. Its function is as follows. Zinc phosphodiesterase, which displays some tRNA 3'-processing endonuclease activity. Probably involved in tRNA maturation, by removing a 3'-trailer from precursor tRNA. The chain is Ribonuclease Z from Kineococcus radiotolerans (strain ATCC BAA-149 / DSM 14245 / SRS30216).